An 89-amino-acid chain; its full sequence is Small ribosomal subunit protein bS20 (89 aa).

It belongs to the bacterial ribosomal protein bS20 family.

Its function is as follows. Binds directly to 16S ribosomal RNA. This chain is Small ribosomal subunit protein bS20, found in Wolbachia sp. subsp. Brugia malayi (strain TRS).